A 529-amino-acid polypeptide reads, in one-letter code: MASSRLWFSLLLAAALAGRATALWPWPQNIQTSDQRYVLYPNNFQFQYDVSSAAQPGCSVLDEAFQRYRDLLFGSGSWPRPYLTGKRHTLEKNVLVVSVVTPGCNQLPTLESVENYTLTINDDQCLLLSETVWGALRGLETFSQLVWKSAEGTFFINKTEIEDFPRFPHRGLLLDTSRHYLPLSSILDTLDVMAYNKLNVFHWHLVDDPSFPYESFTFPELMRKGSYNPVTHIYTAQDVKEVIEYARLRGIRVLAEFDTPGHTLSWGPGIPGLLTPCYSGSEPSGTFGPVNPSLNNTYEFMSTFFLEVSSVFPDFYLHLGGDEVDFTCWKSNPDIQDFMRKKGFGEDFKQLESFYIQTLLDIVSSYGKGYVVWQEVFDNKVKIRPDTIIQVWREDIPVNYMKELELVTKAGFRALLSAPWYLNRISYGPDWKDFYVVEPLAFEGTPEQKALVIGGEACMWGEYVDNTNLVPRLWPRAGAVAERLWSNKLTSDLTFAYERLSHFRCELLRRGVQAQPLNVGFCEQEFEQT.

A signal peptide spans 1–22 (MASSRLWFSLLLAAALAGRATA). Positions 23–88 (LWPWPQNIQT…PRPYLTGKRH (66 aa)) are excised as a propeptide. Cys-58 and Cys-104 are oxidised to a cystine. Asn-115, Asn-157, and Asn-295 each carry an N-linked (GlcNAc...) asparagine glycan. The cysteines at positions 277 and 328 are disulfide-linked. The active-site Proton donor is the Glu-323. A critical for hydrolysis GM2 gangliosides region spans residues 423–424 (NR). Cys-505 and Cys-522 are disulfide-bonded.

Belongs to the glycosyl hydrolase 20 family. As to quaternary structure, there are 3 beta-hexosaminidase isozymes: isozyme A (hexosaminidase A) is a heterodimer composed of one subunit alpha and one subunit beta (chain A and B); isozyme B (hexosaminidase B) is a homodimer of two beta subunits (two chains A and B); isozyme S (hexosaminidase S) is a homodimer of two alpha subunits. The composition of the dimer (isozyme A versus isozyme S) has a significant effect on the substrate specificity of the alpha subunit active site.

It localises to the lysosome. It catalyses the reaction Hydrolysis of terminal non-reducing N-acetyl-D-hexosamine residues in N-acetyl-beta-D-hexosaminides.. The catalysed reaction is N-acetyl-beta-D-galactosaminyl-(1-&gt;4)-beta-D-3-sulfogalactosyl-(1-&gt;4)-beta-D-glucosyl-(1&lt;-&gt;1')-ceramide + H2O = a beta-D-3-sulfogalactosyl-(1-&gt;4)-beta-D-glucosyl-(1&lt;-&gt;1')-ceramide + N-acetyl-beta-D-galactosamine. It carries out the reaction a ganglioside GM2 (d18:1(4E)) + H2O = a ganglioside GM3 (d18:1(4E)) + N-acetyl-beta-D-galactosamine. The enzyme catalyses a ganglioside GM2 + H2O = a ganglioside GM3 + N-acetyl-beta-D-galactosamine. It catalyses the reaction beta-D-GalNAc-(1-&gt;4)-alpha-L-IdoA-(1-&gt;3)-beta-D-GalNAc-4-sulfate-(1-&gt;4)-alpha-L-IdoA-(1-&gt;3)-D-GalNAc-4-sulfate + H2O = alpha-L-IdoA-(1-&gt;3)-beta-D-GalNAc-4-sulfate-(1-&gt;4)-alpha-L-IdoA-(1-&gt;3)-D-GalNAc-4-sulfate + N-acetyl-D-galactosamine. The catalysed reaction is N-acetyl-beta-D-6-sulfogalactosaminyl-(1-&gt;4)-alpha-L-iduronyl-(1-&gt;3)-N-acetyl-D-6-sulfogalactosamine + H2O = alpha-L-iduronyl-(1-&gt;3)-N-acetyl-D-6-sulfogalactosamine + N-acetyl-D-6-sulfogalactosamine. Its activity is regulated as follows. Addition of GM2A stimulates the hydrolysis of sulfated glycosphingolipid SM2 and the ganglioside GM2. Hydrolyzes the non-reducing end N-acetyl-D-hexosamine and/or sulfated N-acetyl-D-hexosamine of glycoconjugates, such as the oligosaccharide moieties from proteins and neutral glycolipids, or from certain mucopolysaccharides. The isozyme S is as active as the isozyme A on the anionic bis-sulfated glycans, the chondroitin-6-sulfate trisaccharide (C6S-3), and the dermatan sulfate pentasaccharide, and the sulfated glycosphingolipid SM2. The isozyme B does not hydrolyze each of these substrates, however hydrolyzes efficiently neutral oligosaccharide. Only the isozyme A is responsible for the degradation of GM2 gangliosides in the presence of GM2A. In Pongo abelii (Sumatran orangutan), this protein is Beta-hexosaminidase subunit alpha.